Consider the following 415-residue polypeptide: MKGSYKSRWVIVIVVVIAAIAAFWFWQGRNDSRSAAPGATKQAQQSPAGGRRGMRAGPLAPVQAATAVEQAVPRYLTGLGTITAANTVTVRSRVDGQLMALHFQEGQQVKAGDLLAEIDPSQFKVALAQAQGQLAKDKATLANARRDLARYQQLVKTNLVSRQELDAQQALVSETEGTIKADEASVASAQLQLDWSRITAPVDGRVGLKQVDVGNQISSGDTTGIVVITQTHPIDLLFTLPESDIATVVQAQKAGKPLVVEAWDRTNSKKLSEGTLLSLDNQIDATTGTIKVKARFNNQDDALFPNQFVNARMLVDTEQNAVVIPTAALQMGNEGHFVWVLNSENKVSKHLVTPGIQDSQKVVIRAGISAGDRVVTDGIDRLTEGAKVEVVEAQSATTSEEKATSREYAKKGARS.

The first 21 residues, 1-21 (MKGSYKSRWVIVIVVVIAAIA), serve as a signal peptide directing secretion. Disordered regions lie at residues 32–56 (SRSA…GMRA) and 392–415 (EAQS…GARS). Positions 399 to 415 (SEEKATSREYAKKGARS) are enriched in basic and acidic residues.

It belongs to the membrane fusion protein (MFP) (TC 8.A.1) family. As to quaternary structure, part of a tripartite efflux system composed of MdtA, MdtB and MdtC.

Its subcellular location is the cell inner membrane. Its function is as follows. The MdtABC tripartite complex confers resistance against novobiocin and deoxycholate. This Escherichia coli O7:K1 (strain IAI39 / ExPEC) protein is Multidrug resistance protein MdtA.